Reading from the N-terminus, the 761-residue chain is Neurotrypsin (761 aa).

The signal sequence occupies residues 1–21; it reads MALARCVLAVILGVLSEVARA. A disordered region spans residues 26–88; the sequence is HSPLHRPHPS…PTISRRCGAG (63 aa). The span at 54–63 shows a compositional bias: pro residues; the sequence is TPRFPLPPRA. A Kringle domain is found at 85-157; sequence CGAGEPWGNA…GKVDWGYCDC (73 aa). Intrachain disulfides connect cysteine 85/cysteine 157, cysteine 101/cysteine 141, cysteine 130/cysteine 155, cysteine 191/cysteine 255, cysteine 204/cysteine 265, cysteine 235/cysteine 245, cysteine 298/cysteine 361, cysteine 311/cysteine 371, cysteine 341/cysteine 351, cysteine 411/cysteine 475, cysteine 424/cysteine 485, cysteine 455/cysteine 465, cysteine 505/cysteine 636, cysteine 547/cysteine 563, cysteine 651/cysteine 717, cysteine 680/cysteine 694, and cysteine 707/cysteine 736. The N-linked (GlcNAc...) asparagine glycan is linked to asparagine 93. SRCR domains follow at residues 166–267, 273–373, and 386–487; these read IRLV…SCAP, IRLS…TCYP, and IRLM…ICDY. The zymogen activation region stretch occupies residues 505 to 516; it reads CGLRLLHRRQKR. The region spanning 517 to 760 is the Peptidase S1 domain; sequence IIGGNNSLRG…FVPWIKSVTS (244 aa). Asparagine 521 is a glycosylation site (N-linked (GlcNAc...) asparagine). The active-site Charge relay system is histidine 562. An N-linked (GlcNAc...) asparagine glycan is attached at asparagine 569. Aspartate 612 acts as the Charge relay system in catalysis. The Charge relay system role is filled by serine 711.

This sequence belongs to the peptidase S1 family.

The protein resides in the secreted. In terms of biological role, plays a role in neuronal plasticity and the proteolytic action may subserve structural reorganizations associated with learning and memory operations. The protein is Neurotrypsin (Prss12) of Rattus norvegicus (Rat).